The sequence spans 330 residues: Pyridoxal 5'-phosphate synthase subunit PdxS (330 aa).

Residue Asp-23 coordinates D-ribose 5-phosphate. The Schiff-base intermediate with D-ribose 5-phosphate role is filled by Lys-80. Gly-152 contacts D-ribose 5-phosphate. Arg-164 serves as a coordination point for D-glyceraldehyde 3-phosphate. Residues Gly-250 and 271-272 (GS) each bind D-ribose 5-phosphate.

It belongs to the PdxS/SNZ family. In the presence of PdxT, forms a dodecamer of heterodimers.

It catalyses the reaction aldehydo-D-ribose 5-phosphate + D-glyceraldehyde 3-phosphate + L-glutamine = pyridoxal 5'-phosphate + L-glutamate + phosphate + 3 H2O + H(+). It participates in cofactor biosynthesis; pyridoxal 5'-phosphate biosynthesis. In terms of biological role, catalyzes the formation of pyridoxal 5'-phosphate from ribose 5-phosphate (RBP), glyceraldehyde 3-phosphate (G3P) and ammonia. The ammonia is provided by the PdxT subunit. Can also use ribulose 5-phosphate and dihydroxyacetone phosphate as substrates, resulting from enzyme-catalyzed isomerization of RBP and G3P, respectively. The polypeptide is Pyridoxal 5'-phosphate synthase subunit PdxS (Methanocaldococcus jannaschii (strain ATCC 43067 / DSM 2661 / JAL-1 / JCM 10045 / NBRC 100440) (Methanococcus jannaschii)).